The chain runs to 379 residues: Cytochrome b (379 aa).

4 consecutive transmembrane segments (helical) span residues 34 to 54, 78 to 99, 114 to 134, and 179 to 199; these read FGSLLGACLILQTITGIFLAM, WLIRNMHANGASLFFMCIYLHI, WNTGITLLLLTMATAFVGYVL, and FFTFHFLLPFTIMGMTMVHLL. Heme b-binding residues include His-84 and His-98. Residues His-183 and His-197 each coordinate heme b. His-202 serves as a coordination point for a ubiquinone. 4 helical membrane passes run 227-247, 289-309, 321-341, and 348-368; these read YKDLLGLILMLAFLLTLTLFY, LGGVLALLLSILVLFLMPTLH, LTQTLFWSFIANLMVLTWIGG, and FITIGQVASILHFLILLILMP.

Belongs to the cytochrome b family. As to quaternary structure, the cytochrome bc1 complex contains 3 respiratory subunits (MT-CYB, CYC1 and UQCRFS1), 2 core proteins (UQCRC1 and UQCRC2) and probably 6 low-molecular weight proteins. Heme b is required as a cofactor.

It is found in the mitochondrion inner membrane. Functionally, component of the ubiquinol-cytochrome c reductase complex (complex III or cytochrome b-c1 complex) that is part of the mitochondrial respiratory chain. The b-c1 complex mediates electron transfer from ubiquinol to cytochrome c. Contributes to the generation of a proton gradient across the mitochondrial membrane that is then used for ATP synthesis. This is Cytochrome b (MT-CYB) from Glyptemys muhlenbergii (Bog turtle).